The primary structure comprises 323 residues: Beta-ketoacyl-[acyl-carrier-protein] synthase III (323 aa).

Residues C112 and H249 contribute to the active site. Residues 250-254 form an ACP-binding region; it reads QANYR. N279 is a catalytic residue.

Belongs to the thiolase-like superfamily. FabH family. Homodimer.

It is found in the cytoplasm. It catalyses the reaction malonyl-[ACP] + acetyl-CoA + H(+) = 3-oxobutanoyl-[ACP] + CO2 + CoA. It functions in the pathway lipid metabolism; fatty acid biosynthesis. In terms of biological role, catalyzes the condensation reaction of fatty acid synthesis by the addition to an acyl acceptor of two carbons from malonyl-ACP. Catalyzes the first condensation reaction which initiates fatty acid synthesis and may therefore play a role in governing the total rate of fatty acid production. Possesses both acetoacetyl-ACP synthase and acetyl transacylase activities. Its substrate specificity determines the biosynthesis of branched-chain and/or straight-chain of fatty acids. This chain is Beta-ketoacyl-[acyl-carrier-protein] synthase III, found in Clostridium kluyveri (strain NBRC 12016).